A 362-amino-acid chain; its full sequence is 3-isopropylmalate dehydrogenase (362 aa).

An NAD(+)-binding site is contributed by 77–88 (GPKWGTGAVRPE). Positions 95, 105, 134, and 223 each coordinate substrate. The Mg(2+) site is built by Asp-223, Asp-248, and Asp-252. 287 to 298 (GSAPDLPPNKVN) contributes to the NAD(+) binding site.

Belongs to the isocitrate and isopropylmalate dehydrogenases family. Homodimer. Mg(2+) is required as a cofactor. Requires Mn(2+) as cofactor.

It localises to the cytoplasm. It carries out the reaction (2R,3S)-3-isopropylmalate + NAD(+) = 4-methyl-2-oxopentanoate + CO2 + NADH. The protein operates within amino-acid biosynthesis; L-leucine biosynthesis; L-leucine from 3-methyl-2-oxobutanoate: step 3/4. Its function is as follows. Catalyzes the oxidation of 3-carboxy-2-hydroxy-4-methylpentanoate (3-isopropylmalate) to 3-carboxy-4-methyl-2-oxopentanoate. The product decarboxylates to 4-methyl-2 oxopentanoate. This Blastobotrys adeninivorans (Yeast) protein is 3-isopropylmalate dehydrogenase (LEU2).